Consider the following 150-residue polypeptide: Protein E6 (150 aa).

Zinc fingers lie at residues 31-67 (CVFC…CACC) and 104-140 (CYLC…CLHC).

Belongs to the papillomaviridae E6 protein family. Forms homodimers. Interacts with ubiquitin-protein ligase UBE3A/E6-AP; this interaction stimulates UBE3A ubiquitin activity. Interacts with host TP53 and EP300; this interaction inhibits TP53 activity. Interacts with human ZYX.

The protein localises to the host cytoplasm. The protein resides in the host nucleus. Its function is as follows. Plays a major role in the induction and maintenance of cellular transformation. E6 associates with host UBE3A/E6-AP ubiquitin-protein ligase and modulates its activity. Sequesters tumor suppressor TP53 in the host cytoplasm and modulates its activity by interacting with host EP300 that results in the reduction of TP53 acetylation and activation. In turn, apoptosis induced by DNA damage is inhibited. E6 also protects host keratinocytes from apoptosis by mediating the degradation of host BAK1. May also inhibit host immune response. This chain is Protein E6, found in Human papillomavirus type 6a.